A 231-amino-acid chain; its full sequence is ATP synthase subunit a (231 aa).

5 consecutive transmembrane segments (helical) span residues 14 to 34, 78 to 98, 107 to 127, 174 to 194, and 196 to 216; these read GFLK…VLAV, YLGF…CTVI, SLST…FFGI, MIIG…MTAL, and LLTG…YIAA.

This sequence belongs to the ATPase A chain family. F-type ATPases have 2 components, CF(1) - the catalytic core - and CF(0) - the membrane proton channel. CF(1) has five subunits: alpha(3), beta(3), gamma(1), delta(1), epsilon(1). CF(0) has three main subunits: a(1), b(2) and c(9-12). The alpha and beta chains form an alternating ring which encloses part of the gamma chain. CF(1) is attached to CF(0) by a central stalk formed by the gamma and epsilon chains, while a peripheral stalk is formed by the delta and b chains.

It is found in the cell inner membrane. Its function is as follows. Key component of the proton channel; it plays a direct role in the translocation of protons across the membrane. The chain is ATP synthase subunit a from Albidiferax ferrireducens (strain ATCC BAA-621 / DSM 15236 / T118) (Rhodoferax ferrireducens).